The primary structure comprises 51 residues: Large ribosomal subunit protein eL39 (51 aa).

Positions 32 to 51 are disordered; the sequence is KGSVKQHPKMRHWRRKNLKK. Residues 33-51 show a composition bias toward basic residues; the sequence is GSVKQHPKMRHWRRKNLKK.

This sequence belongs to the eukaryotic ribosomal protein eL39 family.

The polypeptide is Large ribosomal subunit protein eL39 (Methanococcus maripaludis (strain C5 / ATCC BAA-1333)).